The chain runs to 456 residues: Na(+)-translocating NADH-quinone reductase subunit A (456 aa).

It belongs to the NqrA family. As to quaternary structure, composed of six subunits; NqrA, NqrB, NqrC, NqrD, NqrE and NqrF.

It catalyses the reaction a ubiquinone + n Na(+)(in) + NADH + H(+) = a ubiquinol + n Na(+)(out) + NAD(+). In terms of biological role, NQR complex catalyzes the reduction of ubiquinone-1 to ubiquinol by two successive reactions, coupled with the transport of Na(+) ions from the cytoplasm to the periplasm. NqrA to NqrE are probably involved in the second step, the conversion of ubisemiquinone to ubiquinol. This chain is Na(+)-translocating NADH-quinone reductase subunit A, found in Rhodopirellula baltica (strain DSM 10527 / NCIMB 13988 / SH1).